A 252-amino-acid polypeptide reads, in one-letter code: Small ribosomal subunit protein uS2A (252 aa).

S2 is subject to N-acetylserine. Residues 209–252 (EVEQQVAEEATTEEAGEEEAKEEVTEEQAEATEWAEENADNVEW) form a disordered region. Residues 218–252 (ATTEEAGEEEAKEEVTEEQAEATEWAEENADNVEW) show a composition bias toward acidic residues.

It belongs to the universal ribosomal protein uS2 family. Component of the small ribosomal subunit. Mature ribosomes consist of a small (40S) and a large (60S) subunit. The 40S subunit contains about 33 different proteins and 1 molecule of RNA (18S). The 60S subunit contains about 49 different proteins and 3 molecules of RNA (25S, 5.8S and 5S). Interacts with RPS21.

The protein localises to the cytoplasm. Functionally, required for the assembly and/or stability of the 40S ribosomal subunit. Required for the processing of the 20S rRNA-precursor to mature 18S rRNA in a late step of the maturation of 40S ribosomal subunits. The chain is Small ribosomal subunit protein uS2A from Saccharomyces cerevisiae (strain RM11-1a) (Baker's yeast).